The primary structure comprises 159 residues: Dihydrofolate reductase (159 aa).

The DHFR domain maps to 1–158 (MISLIAALAV…HSYCFEILER (158 aa)). I5 is a substrate binding site. NADP(+)-binding positions include A7 and 13–19 (VIGMENA). D27 lines the substrate pocket. 45–46 (HT) contributes to the NADP(+) binding site. Positions 52 and 57 each coordinate substrate. NADP(+)-binding positions include 63 to 64 (SS), K76, and 95 to 102 (GGGRVYEQ). A substrate-binding site is contributed by T113.

The protein belongs to the dihydrofolate reductase family.

The enzyme catalyses (6S)-5,6,7,8-tetrahydrofolate + NADP(+) = 7,8-dihydrofolate + NADPH + H(+). It functions in the pathway cofactor biosynthesis; tetrahydrofolate biosynthesis; 5,6,7,8-tetrahydrofolate from 7,8-dihydrofolate: step 1/1. Its function is as follows. Key enzyme in folate metabolism. Catalyzes an essential reaction for de novo glycine and purine synthesis, and for DNA precursor synthesis. The chain is Dihydrofolate reductase (folA) from Escherichia coli O6:H1 (strain CFT073 / ATCC 700928 / UPEC).